A 206-amino-acid polypeptide reads, in one-letter code: LysM and putative peptidoglycan-binding domain-containing protein 2 (206 aa).

One can recognise a LysM domain in the interval 59-103 (IEHCLSPSDTLQGIALKYGVTMEQIKRANKLFSTDCIFLRKSLNI). A disordered region spans residues 184 to 206 (AQRLKEEDDLRHDGSYATCSYQH). The segment covering 186-197 (RLKEEDDLRHDG) has biased composition (basic and acidic residues).

This is LysM and putative peptidoglycan-binding domain-containing protein 2 (lysmd2) from Xenopus laevis (African clawed frog).